Reading from the N-terminus, the 186-residue chain is MSIEIITGPMYSGKTTELIRRITRYKLCKKNCVIISHSIDNRCEEDDNILINHDGFKISHDDFIKTNILINKIKIFDKYEIIGIDECQFFDSNDLMIFCDTLANNGKKIIVAGLNSDFNKNPFKSIIKLIPISEKITKLQSICNFCYNDATFTMKKFNKDIIIEIGGSDLYIPVCRICYNENNTIN.

An ATP-binding site is contributed by 8–15 (GPMYSGKT). E86 functions as the Proton acceptor in the catalytic mechanism. F118 contributes to the substrate binding site. 2 residues coordinate Zn(2+): C143 and C146. 162–166 (IIEIG) contributes to the substrate binding site. Residues C175 and C178 each coordinate Zn(2+).

It belongs to the thymidine kinase family.

The catalysed reaction is thymidine + ATP = dTMP + ADP + H(+). This is Thymidine kinase (TK) from Choristoneura fumiferana (Spruce budworm moth).